Here is a 393-residue protein sequence, read N- to C-terminus: MRILKSHPLLRLANSYIIDSPQPSNISYLWNFGSLLAFCLVIQIITGVTLAMHYNPSVLEAFNSVEHIMRDVNNGWLIRYLHANTASAFFFIVYLHMGRGLYYGSYRAPRTLVWTLGVIIFILMIVTAFLGYVLPYGQMSLWGATVITNLMSAIPWIGQDIVEFLWGGFSVNNATLNRFFALHFVLPFVLAALALMHLIALHDSAGSGNPLGVSGNFDRLPFAPYFIFKDLITIFLFILGLSIFVFFAPNILGDSENYVVANPMQTPPAIVPEWYLLPFYAILRSIPNKLLGVIAMFAAIVILLVMPFTDLGRSRGIQFRPLSKIAYYFFIANFLILMKLGAKHVESPFIEFGQISTVLYFSHFVIIVPLVSLIENTLVDLHLHNTLSLKNVF.

A run of 4 helical transmembrane segments spans residues 32-52 (FGSL…TLAM), 76-98 (WLIR…LHMG), 113-133 (VWTL…LGYV), and 179-199 (FFAL…MHLI). Heme b-binding residues include His82 and His96. The heme b site is built by His183 and His197. Position 202 (His202) interacts with a ubiquinone. 4 consecutive transmembrane segments (helical) span residues 226–246 (FIFK…IFVF), 290–310 (LLGV…PFTD), 322–342 (LSKI…KLGA), and 349–369 (FIEF…IIVP).

Belongs to the cytochrome b family. As to quaternary structure, fungal cytochrome b-c1 complex contains 10 subunits; 3 respiratory subunits, 2 core proteins and 5 low-molecular weight proteins. Cytochrome b-c1 complex is a homodimer. Requires heme b as cofactor.

It localises to the mitochondrion inner membrane. In terms of biological role, component of the ubiquinol-cytochrome c reductase complex (complex III or cytochrome b-c1 complex) that is part of the mitochondrial respiratory chain. The b-c1 complex mediates electron transfer from ubiquinol to cytochrome c. Contributes to the generation of a proton gradient across the mitochondrial membrane that is then used for ATP synthesis. The polypeptide is Cytochrome b (COB) (Venturia inaequalis (Apple scab fungus)).